The primary structure comprises 123 residues: Large ribosomal subunit protein bL12 (123 aa).

The protein belongs to the bacterial ribosomal protein bL12 family. In terms of assembly, homodimer. Part of the ribosomal stalk of the 50S ribosomal subunit. Forms a multimeric L10(L12)X complex, where L10 forms an elongated spine to which 2 to 4 L12 dimers bind in a sequential fashion. Binds GTP-bound translation factors.

Forms part of the ribosomal stalk which helps the ribosome interact with GTP-bound translation factors. Is thus essential for accurate translation. The polypeptide is Large ribosomal subunit protein bL12 (Bartonella henselae (strain ATCC 49882 / DSM 28221 / CCUG 30454 / Houston 1) (Rochalimaea henselae)).